The primary structure comprises 149 residues: Large ribosomal subunit protein bL9 (149 aa).

This sequence belongs to the bacterial ribosomal protein bL9 family.

Binds to the 23S rRNA. In Geobacillus thermodenitrificans (strain NG80-2), this protein is Large ribosomal subunit protein bL9.